The primary structure comprises 334 residues: Adenosine deaminase (334 aa).

Residues His12 and His14 each contribute to the Zn(2+) site. Substrate-binding residues include His14, Asp16, and Gly170. Residue His197 coordinates Zn(2+). Glu200 (proton donor) is an active-site residue. Residue Asp278 participates in Zn(2+) binding. Residue Asp279 coordinates substrate.

It belongs to the metallo-dependent hydrolases superfamily. Adenosine and AMP deaminases family. Adenosine deaminase subfamily. Zn(2+) is required as a cofactor.

It carries out the reaction adenosine + H2O + H(+) = inosine + NH4(+). The catalysed reaction is 2'-deoxyadenosine + H2O + H(+) = 2'-deoxyinosine + NH4(+). Its function is as follows. Catalyzes the hydrolytic deamination of adenosine and 2-deoxyadenosine. The polypeptide is Adenosine deaminase (Vibrio parahaemolyticus serotype O3:K6 (strain RIMD 2210633)).